The sequence spans 385 residues: MVSSATILRMVAPCWRRPSVKGDHSTRDANGRCDGLLWYKDSGNHVAGEFSMSVIQANNLLEDHSKLESGPVSMFDSGPQATFVGVYDGHGGPEAARFVNKHLFDNIRKFTSENHGMSANVITKAFLATEEDFLSLVRRQWQIKPQIASVGACCLVGIICSGLLYIANAGDSRVVLGRLEKAFKIVKAVQLSSEHNASLESVREELRSLHPNDPQIVVLKHKVWRVKGIIQVSRSIGDAYLKKAEFNREPLLAKFRVPEVFHKPILRAEPAITVHKIHPEDQFLIFASDGLWEHLSNQEAVDIVNTCPRNGIARKLIKTALREAAKKREMRYSDLKKIDRGVRRHFHDDITVIVVFLDSHLVSRSTSRRPLLSISGGGDLAGPST.

Residues 46–357 (VAGEFSMSVI…DDITVIVVFL (312 aa)) enclose the PPM-type phosphatase domain. S77 carries the post-translational modification Phosphoserine. 4 residues coordinate Mn(2+): D88, G89, D289, and D348.

It belongs to the PP2C family. As to quaternary structure, interacts with BIK1. Mg(2+) serves as cofactor. The cofactor is Mn(2+). Phosphorylation at Ser-77 induces dissociation of PP2C38 from BIK1.

It is found in the cell membrane. It catalyses the reaction O-phospho-L-seryl-[protein] + H2O = L-seryl-[protein] + phosphate. The enzyme catalyses O-phospho-L-threonyl-[protein] + H2O = L-threonyl-[protein] + phosphate. May dephosphorylate and repress plasma membrane H(+)-ATPases (PM H(+)-ATPases, e.g. AHA1 and AHA2), thus influencing negatively plant growth and fitness. Involved in pathogen-associated molecular pattern (PAMP)-triggered immunity (PTI) signaling. Negatively regulates immune responses by controlling the phosphorylation and activation status of BIK1, a central rate-limiting kinase in PTI signaling. Impairs the phosphorylation of the NADPH oxidase RBOHD by BIK1. This chain is Probable protein phosphatase 2C 38, found in Arabidopsis thaliana (Mouse-ear cress).